Here is a 179-residue protein sequence, read N- to C-terminus: Large ribosomal subunit protein uL5 (179 aa).

It belongs to the universal ribosomal protein uL5 family. As to quaternary structure, part of the 50S ribosomal subunit; part of the 5S rRNA/L5/L18/L25 subcomplex. Contacts the 5S rRNA and the P site tRNA. Forms a bridge to the 30S subunit in the 70S ribosome.

Its function is as follows. This is one of the proteins that bind and probably mediate the attachment of the 5S RNA into the large ribosomal subunit, where it forms part of the central protuberance. In the 70S ribosome it contacts protein S13 of the 30S subunit (bridge B1b), connecting the 2 subunits; this bridge is implicated in subunit movement. Contacts the P site tRNA; the 5S rRNA and some of its associated proteins might help stabilize positioning of ribosome-bound tRNAs. This is Large ribosomal subunit protein uL5 from Aromatoleum aromaticum (strain DSM 19018 / LMG 30748 / EbN1) (Azoarcus sp. (strain EbN1)).